Consider the following 608-residue polypeptide: Glutamine--fructose-6-phosphate aminotransferase [isomerizing] (608 aa).

Residue Cys2 is the Nucleophile; for GATase activity of the active site. Residues 2–217 (CGIVGIVGNQ…DGDWAVIGKT (216 aa)) form the Glutamine amidotransferase type-2 domain. 2 SIS domains span residues 281–422 (ISDA…ARGT) and 456–598 (LSRE…VDQP). Lys603 acts as the For Fru-6P isomerization activity in catalysis.

In terms of assembly, homodimer.

The protein resides in the cytoplasm. The enzyme catalyses D-fructose 6-phosphate + L-glutamine = D-glucosamine 6-phosphate + L-glutamate. Its function is as follows. Catalyzes the first step in hexosamine metabolism, converting fructose-6P into glucosamine-6P using glutamine as a nitrogen source. This chain is Glutamine--fructose-6-phosphate aminotransferase [isomerizing], found in Rhizobium meliloti (strain 1021) (Ensifer meliloti).